Here is a 39-residue protein sequence, read N- to C-terminus: Cytochrome b559 subunit beta (39 aa).

A helical transmembrane segment spans residues 14–30 (WLAIHGLAVPTVFFLGS). Residue His-18 participates in heme binding.

The protein belongs to the PsbE/PsbF family. In terms of assembly, heterodimer of an alpha subunit and a beta subunit. PSII is composed of 1 copy each of membrane proteins PsbA, PsbB, PsbC, PsbD, PsbE, PsbF, PsbH, PsbI, PsbJ, PsbK, PsbL, PsbM, PsbT, PsbX, PsbY, PsbZ, Psb30/Ycf12, at least 3 peripheral proteins of the oxygen-evolving complex and a large number of cofactors. It forms dimeric complexes. It depends on heme b as a cofactor.

The protein resides in the plastid. The protein localises to the chloroplast thylakoid membrane. This b-type cytochrome is tightly associated with the reaction center of photosystem II (PSII). PSII is a light-driven water:plastoquinone oxidoreductase that uses light energy to abstract electrons from H(2)O, generating O(2) and a proton gradient subsequently used for ATP formation. It consists of a core antenna complex that captures photons, and an electron transfer chain that converts photonic excitation into a charge separation. The protein is Cytochrome b559 subunit beta of Staurastrum punctulatum (Green alga).